The primary structure comprises 341 residues: 5-formaminoimidazole-4-carboxamide-1-(beta)-D-ribofuranosyl 5'-monophosphate synthetase (341 aa).

5-amino-1-(5-phospho-beta-D-ribosyl)imidazole-4-carboxamide-binding residues include His-27 and Ser-92. One can recognise an ATP-grasp domain in the interval 113–328 (RELLRWEADQ…MGERIAHEIK (216 aa)). Residues 143-195 (AEEV…VPAY) and Glu-217 contribute to the ATP site. A 5-amino-1-(5-phospho-beta-D-ribosyl)imidazole-4-carboxamide-binding site is contributed by Asn-237. Positions 276 and 289 each coordinate Mg(2+).

Belongs to the phosphohexose mutase family. Mg(2+) serves as cofactor. It depends on Mn(2+) as a cofactor.

The catalysed reaction is 5-amino-1-(5-phospho-beta-D-ribosyl)imidazole-4-carboxamide + formate + ATP = 5-formamido-1-(5-phospho-D-ribosyl)imidazole-4-carboxamide + ADP + phosphate. The protein operates within purine metabolism; IMP biosynthesis via de novo pathway; 5-formamido-1-(5-phospho-D-ribosyl)imidazole-4-carboxamide from 5-amino-1-(5-phospho-D-ribosyl)imidazole-4-carboxamide (formate route): step 1/1. Its function is as follows. Catalyzes the ATP- and formate-dependent formylation of 5-aminoimidazole-4-carboxamide-1-beta-d-ribofuranosyl 5'-monophosphate (AICAR) to 5-formaminoimidazole-4-carboxamide-1-beta-d-ribofuranosyl 5'-monophosphate (FAICAR) in the absence of folates. This chain is 5-formaminoimidazole-4-carboxamide-1-(beta)-D-ribofuranosyl 5'-monophosphate synthetase, found in Pyrobaculum aerophilum (strain ATCC 51768 / DSM 7523 / JCM 9630 / CIP 104966 / NBRC 100827 / IM2).